The chain runs to 235 residues: MKGFFVTGTDTGVGKTFIACGLAALLKEQHVDVGVFKPFLSGELASDPQSDTALLKNMSETPLTDEEVTPFIFKEPLAPYTAAKLEGRTVGLEDAVNHWKKIKDRHECFIVEGAGGIAVPLGEDYFVSDLIKALDLPAVIVARPNLGTINHTYLTAQYAKQMGIRVIGIVINGISSRPGLDEQTNPDMIERFCGVPLLGVTPKLEDASPTQIHHMIKDHVDVSLIMNQMQMGAEK.

12 to 17 lines the ATP pocket; that stretch reads GVGKTF. Threonine 16 contributes to the Mg(2+) binding site. Lysine 37 is an active-site residue. Serine 41 provides a ligand contact to substrate. Residues aspartate 51, 112–115, and 202–204 each bind ATP; these read EGAG and PKL. Mg(2+)-binding residues include aspartate 51 and glutamate 112.

It belongs to the dethiobiotin synthetase family. Homodimer. Mg(2+) serves as cofactor.

The protein resides in the cytoplasm. The enzyme catalyses (7R,8S)-7,8-diammoniononanoate + CO2 + ATP = (4R,5S)-dethiobiotin + ADP + phosphate + 3 H(+). It participates in cofactor biosynthesis; biotin biosynthesis; biotin from 7,8-diaminononanoate: step 1/2. Catalyzes a mechanistically unusual reaction, the ATP-dependent insertion of CO2 between the N7 and N8 nitrogen atoms of 7,8-diaminopelargonic acid (DAPA, also called 7,8-diammoniononanoate) to form a ureido ring. The sequence is that of ATP-dependent dethiobiotin synthetase BioD from Bacillus licheniformis (strain ATCC 14580 / DSM 13 / JCM 2505 / CCUG 7422 / NBRC 12200 / NCIMB 9375 / NCTC 10341 / NRRL NRS-1264 / Gibson 46).